Consider the following 739-residue polypeptide: Phosphoribosylformylglycinamidine synthase subunit PurL (739 aa).

Histidine 54 is an active-site residue. Residues tyrosine 57 and lysine 96 each contribute to the ATP site. Glutamate 98 provides a ligand contact to Mg(2+). Residues 99-102 (SHNH) and arginine 121 each bind substrate. Histidine 100 (proton acceptor) is an active-site residue. Aspartate 122 is a binding site for Mg(2+). Glutamine 245 serves as a coordination point for substrate. Mg(2+) is bound at residue aspartate 273. Substrate is bound at residue 317–319 (ESQ). ATP contacts are provided by aspartate 500 and glycine 537. Asparagine 538 is a Mg(2+) binding site. Residue serine 540 participates in substrate binding.

This sequence belongs to the FGAMS family. Monomer. Part of the FGAM synthase complex composed of 1 PurL, 1 PurQ and 2 PurS subunits.

Its subcellular location is the cytoplasm. The catalysed reaction is N(2)-formyl-N(1)-(5-phospho-beta-D-ribosyl)glycinamide + L-glutamine + ATP + H2O = 2-formamido-N(1)-(5-O-phospho-beta-D-ribosyl)acetamidine + L-glutamate + ADP + phosphate + H(+). Its pathway is purine metabolism; IMP biosynthesis via de novo pathway; 5-amino-1-(5-phospho-D-ribosyl)imidazole from N(2)-formyl-N(1)-(5-phospho-D-ribosyl)glycinamide: step 1/2. Its function is as follows. Part of the phosphoribosylformylglycinamidine synthase complex involved in the purines biosynthetic pathway. Catalyzes the ATP-dependent conversion of formylglycinamide ribonucleotide (FGAR) and glutamine to yield formylglycinamidine ribonucleotide (FGAM) and glutamate. The FGAM synthase complex is composed of three subunits. PurQ produces an ammonia molecule by converting glutamine to glutamate. PurL transfers the ammonia molecule to FGAR to form FGAM in an ATP-dependent manner. PurS interacts with PurQ and PurL and is thought to assist in the transfer of the ammonia molecule from PurQ to PurL. The polypeptide is Phosphoribosylformylglycinamidine synthase subunit PurL (Bacillus cereus (strain ATCC 10987 / NRS 248)).